Consider the following 602-residue polypeptide: Elongation factor 4 (602 aa).

The 183-residue stretch at 6-188 (RNVRNFSIIA…RITEVVPEPA (183 aa)) folds into the tr-type G domain. GTP is bound by residues 18-23 (DHGKST) and 135-138 (NKID).

It belongs to the TRAFAC class translation factor GTPase superfamily. Classic translation factor GTPase family. LepA subfamily.

The protein resides in the cell membrane. It carries out the reaction GTP + H2O = GDP + phosphate + H(+). In terms of biological role, required for accurate and efficient protein synthesis under certain stress conditions. May act as a fidelity factor of the translation reaction, by catalyzing a one-codon backward translocation of tRNAs on improperly translocated ribosomes. Back-translocation proceeds from a post-translocation (POST) complex to a pre-translocation (PRE) complex, thus giving elongation factor G a second chance to translocate the tRNAs correctly. Binds to ribosomes in a GTP-dependent manner. The protein is Elongation factor 4 of Oceanobacillus iheyensis (strain DSM 14371 / CIP 107618 / JCM 11309 / KCTC 3954 / HTE831).